We begin with the raw amino-acid sequence, 490 residues long: Hexokinase (490 aa).

The Hexokinase domain maps to 21–466 (QNLLEHIKHF…SGVGAALIAA (446 aa)). A hexokinase small subdomain region spans residues 75 to 209 (DGKETGTFLA…GLPIKVAALI (135 aa)). A hexokinase large subdomain region spans residues 210-455 (NDTTGTLIAS…DKVTIHAAED (246 aa)).

It belongs to the hexokinase family. Monomer.

The enzyme catalyses a D-hexose + ATP = a D-hexose 6-phosphate + ADP + H(+). It carries out the reaction D-fructose + ATP = D-fructose 6-phosphate + ADP + H(+). It catalyses the reaction D-glucose + ATP = D-glucose 6-phosphate + ADP + H(+). The protein operates within carbohydrate metabolism; hexose metabolism. Its pathway is carbohydrate degradation; glycolysis; D-glyceraldehyde 3-phosphate and glycerone phosphate from D-glucose: step 1/4. Catalyzes the phosphorylation of hexose, such as D-glucose and D-fructose, to hexose 6-phosphate (D-glucose 6-phosphate and D-fructose 6-phosphate, respectively). Mediates the initial step of glycolysis by catalyzing phosphorylation of D-glucose to D-glucose 6-phosphate. The chain is Hexokinase (hxkA) from Emericella nidulans (strain FGSC A4 / ATCC 38163 / CBS 112.46 / NRRL 194 / M139) (Aspergillus nidulans).